The following is a 211-amino-acid chain: ATP phosphoribosyltransferase (211 aa).

It belongs to the ATP phosphoribosyltransferase family. Short subfamily. As to quaternary structure, heteromultimer composed of HisG and HisZ subunits.

The protein localises to the cytoplasm. It carries out the reaction 1-(5-phospho-beta-D-ribosyl)-ATP + diphosphate = 5-phospho-alpha-D-ribose 1-diphosphate + ATP. It participates in amino-acid biosynthesis; L-histidine biosynthesis; L-histidine from 5-phospho-alpha-D-ribose 1-diphosphate: step 1/9. Its function is as follows. Catalyzes the condensation of ATP and 5-phosphoribose 1-diphosphate to form N'-(5'-phosphoribosyl)-ATP (PR-ATP). Has a crucial role in the pathway because the rate of histidine biosynthesis seems to be controlled primarily by regulation of HisG enzymatic activity. This chain is ATP phosphoribosyltransferase, found in Pseudomonas fluorescens (strain Pf0-1).